Consider the following 444-residue polypeptide: Acyl-CoA 6-desaturase (444 aa).

The Cytoplasmic segment spans residues 1-130 (MGGGGQQTDR…EAEGCFKTQP (130 aa)). The Cytochrome b5 heme-binding domain maps to 18–95 (FSSYTWEEVQ…LKPLLIGELE (78 aa)). Residues 131 to 151 (LFFALHLGHILLLEAIAFMMV) traverse the membrane as a helical segment. The Lumenal portion of the chain corresponds to 152 to 157 (WYFGTG). The helical transmembrane segment at 158 to 178 (WINTLIVAVILATAQSQAGWL) threads the bilayer. Over 179 to 264 (QHDFGHLSVF…KHLPYNHQHK (86 aa)) the chain is Cytoplasmic. The Histidine box-1 signature appears at 180-184 (HDFGH). The Histidine box-2 motif lies at 217–221 (HFQHH). A helical membrane pass occupies residues 265–285 (YFFFIGPPLLIPVYFQFQIFH). The Lumenal portion of the chain corresponds to 286 to 305 (NMISHGMWVDLLWCISYYVR). Residues 306–326 (YFLCYTQFYGVFWAIILFNFV) traverse the membrane as a helical segment. Topologically, residues 327 to 444 (RFMESHWFVW…ELWLDAYLNK (118 aa)) are cytoplasmic. The short motif at 382–386 (QIEHH) is the Histidine box-3 element.

It belongs to the fatty acid desaturase type 1 family.

It localises to the endoplasmic reticulum membrane. It carries out the reaction (9Z,12Z)-octadecadienoyl-CoA + 2 Fe(II)-[cytochrome b5] + O2 + 2 H(+) = (6Z,9Z,12Z)-octadecatrienoyl-CoA + 2 Fe(III)-[cytochrome b5] + 2 H2O. It catalyses the reaction (9Z,12Z,15Z)-octadecatrienoyl-CoA + 2 Fe(II)-[cytochrome b5] + O2 + 2 H(+) = (6Z,9Z,12Z,15Z)-octadecatetraenoyl-CoA + 2 Fe(III)-[cytochrome b5] + 2 H2O. The catalysed reaction is (8Z,11Z,14Z,17Z)-eicosatetraenoyl-CoA + 2 Fe(II)-[cytochrome b5] + O2 + 2 H(+) = (5Z,8Z,11Z,14Z,17Z)-eicosapentaenoyl-CoA + 2 Fe(III)-[cytochrome b5] + 2 H2O. The enzyme catalyses (8Z,11Z,14Z)-eicosatrienoyl-CoA + 2 Fe(II)-[cytochrome b5] + O2 + 2 H(+) = (5Z,8Z,11Z,14Z)-eicosatetraenoyl-CoA + 2 Fe(III)-[cytochrome b5] + 2 H2O. The protein operates within lipid metabolism; polyunsaturated fatty acid biosynthesis. Functionally, fatty acid desaturase with bifunctional delta-5 and delta-6 activities. Component of a lipid metabolic pathway that catalyzes the biosynthesis of polyunsaturated fatty acids (PUFA) with preference toward n-3 substrates and Delta-6 function. This chain is Acyl-CoA 6-desaturase (fads2), found in Danio rerio (Zebrafish).